The primary structure comprises 1065 residues: Putative guanine nucleotide-exchange factor SED4 (1065 aa).

At 1–346 (MSGNSANYDV…SSSILRNIWK (346 aa)) the chain is on the cytoplasmic side. Position 65 is a phosphoserine (Ser65). 2 WD repeats span residues 259 to 298 (FDLN…LVQL) and 302 to 341 (VHES…SSIL). A helical; Signal-anchor for type II membrane protein transmembrane segment spans residues 347-365 (FFLNFVLLVVLAGAIQLGY). Residues 366–1065 (KHNVHGFIYK…VNYAGLHDEL (700 aa)) lie on the Lumenal side of the membrane. Asn388 carries an N-linked (GlcNAc...) asparagine glycan. Disordered regions lie at residues 458-477 (TSAD…SSSF), 482-520 (VTNE…SESI), and 551-625 (QSES…SFLD). Over residues 465 to 476 (SASSSSSSSSSS) the composition is skewed to low complexity. Residues 482 to 495 (VTNEPIVSSPTSEI) are compositionally biased toward polar residues. Low complexity predominate over residues 568 to 621 (STESPSLSHMPSSSSSSLSLSSSLTTSPTTALSTSTATAVTTTQTNPTNDAANT). The N-linked (GlcNAc...) asparagine glycan is linked to Asn620. 4 consecutive repeat copies span residues 824-833 (IDNSEYTSVL), 834-843 (ADNLEPTSVL), 844-853 (ADNSEPTSVL), and 854-863 (ADSSEPTSVF). Positions 824 to 863 (IDNSEYTSVLADNLEPTSVLADNSEPTSVLADSSEPTSVF) are 4 X 10 AA tandem repeats. Asn1039 carries N-linked (GlcNAc...) asparagine glycosylation. The Prevents secretion from ER signature appears at 1062-1065 (HDEL).

Belongs to the WD repeat SEC12 family.

The protein resides in the endoplasmic reticulum membrane. The protein localises to the golgi apparatus membrane. Functionally, putative guanine nucleotide-exchange factor (GEF) involved in the formation or budding of transport vesicles from the ER. Positive regulator of SAR1 probably through inhibition of the GTPase activation by SEC23. In Saccharomyces cerevisiae (strain ATCC 204508 / S288c) (Baker's yeast), this protein is Putative guanine nucleotide-exchange factor SED4 (SED4).